The sequence spans 432 residues: Enolase (432 aa).

Position 167 (Q167) interacts with (2R)-2-phosphoglycerate. Catalysis depends on E209, which acts as the Proton donor. Mg(2+) is bound by residues D246, E291, and D318. 4 residues coordinate (2R)-2-phosphoglycerate: K343, R372, S373, and K394. Residue K343 is the Proton acceptor of the active site.

It belongs to the enolase family. In terms of assembly, component of the RNA degradosome, a multiprotein complex involved in RNA processing and mRNA degradation. Requires Mg(2+) as cofactor.

It is found in the cytoplasm. The protein localises to the secreted. It localises to the cell surface. It catalyses the reaction (2R)-2-phosphoglycerate = phosphoenolpyruvate + H2O. It functions in the pathway carbohydrate degradation; glycolysis; pyruvate from D-glyceraldehyde 3-phosphate: step 4/5. In terms of biological role, catalyzes the reversible conversion of 2-phosphoglycerate (2-PG) into phosphoenolpyruvate (PEP). It is essential for the degradation of carbohydrates via glycolysis. This chain is Enolase, found in Colwellia psychrerythraea (strain 34H / ATCC BAA-681) (Vibrio psychroerythus).